A 363-amino-acid polypeptide reads, in one-letter code: Probable endopolygalacturonase A (363 aa).

The N-terminal stretch at 1-20 (MQLLQSSVIAATVGAALVAA) is a signal peptide. Positions 21-28 (APVELEAR) are excised as a propeptide. Residues cysteine 31 and cysteine 46 are joined by a disulfide bond. PbH1 repeat units follow at residues 158-187 (SDNL…DIGS), 188-209 (STYI…AINS), 210-230 (GSHI…SIGS), 239-260 (VEDV…RIKT), 268-290 (VSNV…VVEQ), and 302-347 (TNGI…SITG). N-linked (GlcNAc...) asparagine glycosylation occurs at asparagine 162. The active-site Proton donor is the aspartate 202. Cysteine 204 and cysteine 220 are disulfide-bonded. Residue histidine 224 is part of the active site. 2 disulfide bridges follow: cysteine 330/cysteine 335 and cysteine 354/cysteine 363.

This sequence belongs to the glycosyl hydrolase 28 family.

Its subcellular location is the secreted. The enzyme catalyses (1,4-alpha-D-galacturonosyl)n+m + H2O = (1,4-alpha-D-galacturonosyl)n + (1,4-alpha-D-galacturonosyl)m.. Involved in maceration and soft-rotting of plant tissue. Hydrolyzes the 1,4-alpha glycosidic bonds of de-esterified pectate in the smooth region of the plant cell wall. This Aspergillus parasiticus protein is Probable endopolygalacturonase A (pgaA).